The chain runs to 487 residues: L-carnitine dehydrogenase/betainyl-CoA thioesterase (487 aa).

The segment at 1 to 327 (MTTAAIIGGG…DAALKPKALP (327 aa)) is L-carnitine dehydrogenase. 8 to 13 (GGGVIG) is a binding site for NAD(+). A betainyl-CoA thioesterase region spans residues 328 to 487 (DLDTADLTQP…GAGSAIRKPA (160 aa)).

In the N-terminal section; belongs to the 3-hydroxyacyl-CoA dehydrogenase family. L-carnitine dehydrogenase subfamily. This sequence in the C-terminal section; belongs to the betainyl-CoA thioesterase family. In terms of assembly, homodimer.

It localises to the cytoplasm. It carries out the reaction carnitine + NAD(+) = 3-dehydrocarnitine + NADH + H(+). The enzyme catalyses N,N,N-trimethylglycyl-CoA + H2O = glycine betaine + CoA + H(+). The protein operates within amine and polyamine metabolism; carnitine metabolism. Its function is as follows. Multifunctional enzyme that catalyzes the NAD(+)-dependent oxidation of L-carnitine to 3-dehydrocarnitine and the cleavage of betainyl-CoA (N,N,N-trimethylglycyl-CoA) into glycine betaine and coenzyme A. The protein is L-carnitine dehydrogenase/betainyl-CoA thioesterase of Ruegeria pomeroyi (strain ATCC 700808 / DSM 15171 / DSS-3) (Silicibacter pomeroyi).